Here is a 127-residue protein sequence, read N- to C-terminus: Small ribosomal subunit protein uS17m (127 aa).

Belongs to the universal ribosomal protein uS17 family.

Its subcellular location is the mitochondrion. The sequence is that of Small ribosomal subunit protein uS17m (mrps17) from Dictyostelium discoideum (Social amoeba).